The sequence spans 527 residues: MLNVPSQAFPAAGSQQRVAPAGQSRNKVVLKPGHSLLDWIRLTKSGQDLTGLRGRLIEVTEDELKKHNTKKDCWTCIRGMVYNLSAYMDFHPGGEEELMRAAGIDSTDLFDEVHRWVNYESMLKECLVGRMAVKPSPALQAHTEKTESTHLNGLSAPPSLRPEPLSAPLPAKDHRPRYDWFQTDGTVNIVVYTKRKIPSAGCAVVDLQDDNLRVEMLLGRMSYLLYWRLSSRVQDHVDVQTAHSVGKVQLCLRKSVKEKWTQLGQSLEHHDTFIQCKDRGLFYRECVLLSKTDVTHNTQLLRLQLPRGSRMQVPVGRHVYLKTSVQGTDVVKPYTAVDQMLIPPSQSSAEVGSDIHLMIKVYPDGVLTPHIANLPIGASLSVGGPEGSFTLRVLRDVTHLYMLAAGTGFTPMARLIRLALQDFTVIRKMKLMFFNRQERDILWQSQLDELCTKEERFEVQHVLSEPADSWTGRRGRIDACMLQNFLERPENSKCLVCVCGPAGFTESAVQLVRQLDFSEEELHVFQA.

The tract at residues 1-24 (MLNVPSQAFPAAGSQQRVAPAGQS) is disordered. Residues 56–132 (LIEVTEDELK…LKECLVGRMA (77 aa)) enclose the Cytochrome b5 heme-binding domain. Heme contacts are provided by histidine 91 and histidine 114. Residues 138–171 (ALQAHTEKTESTHLNGLSAPPSLRPEPLSAPLPA) form a disordered region. Residues 173-264 (DHRPRYDWFQ…SVKEKWTQLG (92 aa)) enclose the CS domain. In terms of domain architecture, FAD-binding FR-type spans 281–392 (LFYRECVLLS…GGPEGSFTLR (112 aa)). Residues 372-387 (ANLP…GPEG) and 399-431 (HLYM…KMKL) contribute to the FAD site.

Belongs to the flavoprotein pyridine nucleotide cytochrome reductase family. The cofactor is FAD.

Its subcellular location is the endoplasmic reticulum. The enzyme catalyses 2 Fe(III)-[cytochrome b5] + NADH = 2 Fe(II)-[cytochrome b5] + NAD(+) + H(+). Its function is as follows. NADH-cytochrome b5 reductase involved in endoplasmic reticulum stress response pathway. This Danio rerio (Zebrafish) protein is Cytochrome b5 reductase 4 (cyb5r4).